The chain runs to 664 residues: UvrABC system protein B (664 aa).

The Helicase ATP-binding domain occupies 25–412 (KGLVSGLTDQ…LQVVEQLVRP (388 aa)). Residue 38 to 45 (GVTGSGKT) participates in ATP binding. Residues 91-114 (YYDYYQPEAYVPQKDMYIEKDSDI) carry the Beta-hairpin motif. Residues 428 to 594 (QIDDLLEEVK…GIRKAIKDIN (167 aa)) form the Helicase C-terminal domain. Residues 620–655 (ARLIKELESQMKKAAKNLEFERAALIRDRVVELRAA) enclose the UVR domain.

Belongs to the UvrB family. Forms a heterotetramer with UvrA during the search for lesions. Interacts with UvrC in an incision complex.

The protein localises to the cytoplasm. The UvrABC repair system catalyzes the recognition and processing of DNA lesions. A damage recognition complex composed of 2 UvrA and 2 UvrB subunits scans DNA for abnormalities. Upon binding of the UvrA(2)B(2) complex to a putative damaged site, the DNA wraps around one UvrB monomer. DNA wrap is dependent on ATP binding by UvrB and probably causes local melting of the DNA helix, facilitating insertion of UvrB beta-hairpin between the DNA strands. Then UvrB probes one DNA strand for the presence of a lesion. If a lesion is found the UvrA subunits dissociate and the UvrB-DNA preincision complex is formed. This complex is subsequently bound by UvrC and the second UvrB is released. If no lesion is found, the DNA wraps around the other UvrB subunit that will check the other stand for damage. This chain is UvrABC system protein B, found in Dehalococcoides mccartyi (strain CBDB1).